We begin with the raw amino-acid sequence, 139 residues long: uncharacterized protein (139 aa).

The next 2 membrane-spanning stretches (helical) occupy residues 35-55 and 57-77; these read LVFL…SFLI and FGIL…LTVI.

It is found in the membrane. This is an uncharacterized protein from Saccharomyces cerevisiae (strain ATCC 204508 / S288c) (Baker's yeast).